The sequence spans 103 residues: ATP synthase F(0) complex subunit g, mitochondrial (103 aa).

Position 2 is an N-acetylalanine (alanine 2). An N6-acetyllysine mark is found at lysine 11, lysine 24, lysine 35, and lysine 54.

As to quaternary structure, component of the ATP synthase complex composed at least of ATP5F1A/subunit alpha, ATP5F1B/subunit beta, ATP5MC1/subunit c (homooctomer), MT-ATP6/subunit a, MT-ATP8/subunit 8, ATP5ME/subunit e, ATP5MF/subunit f, ATP5MG/subunit g, ATP5MK/subunit k, ATP5MJ/subunit j, ATP5F1C/subunit gamma, ATP5F1D/subunit delta, ATP5F1E/subunit epsilon, ATP5PF/subunit F6, ATP5PB/subunit b, ATP5PD/subunit d, ATP5PO/subunit OSCP. ATP synthase complex consists of a soluble F(1) head domain (subunits alpha(3) and beta(3)) - the catalytic core - and a membrane F(0) domain - the membrane proton channel (subunits c, a, 8, e, f, g, k and j). These two domains are linked by a central stalk (subunits gamma, delta, and epsilon) rotating inside the F1 region and a stationary peripheral stalk (subunits F6, b, d, and OSCP).

The protein localises to the mitochondrion. The protein resides in the mitochondrion inner membrane. Functionally, subunit g, of the mitochondrial membrane ATP synthase complex (F(1)F(0) ATP synthase or Complex V) that produces ATP from ADP in the presence of a proton gradient across the membrane which is generated by electron transport complexes of the respiratory chain. ATP synthase complex consist of a soluble F(1) head domain - the catalytic core - and a membrane F(1) domain - the membrane proton channel. These two domains are linked by a central stalk rotating inside the F(1) region and a stationary peripheral stalk. During catalysis, ATP synthesis in the catalytic domain of F(1) is coupled via a rotary mechanism of the central stalk subunits to proton translocation. In vivo, can only synthesize ATP although its ATP hydrolase activity can be activated artificially in vitro. Part of the complex F(0) domain. The protein is ATP synthase F(0) complex subunit g, mitochondrial of Bos taurus (Bovine).